The chain runs to 96 residues: MHLKYYLHNLPESLIPWILILIFNDNDNTPLLFIFISSIHVLLYPYSKLTISRYIKENTKLKKEPWYLCKLSALFYLLMAIPVGLPSFIYYTLKRN.

The chain crosses the membrane as a helical span at residues 73-93 (ALFYLLMAIPVGLPSFIYYTL).

The protein resides in the cell membrane. In terms of biological role, this protein is able to protect a cell, which harbors the plasmid ColK encoding colicin K, against colicin K. This chain is Colicin-K immunity protein (cki), found in Escherichia coli.